The following is a 300-amino-acid chain: Type II restriction enzyme HindIII (300 aa).

The catalysed reaction is Endonucleolytic cleavage of DNA to give specific double-stranded fragments with terminal 5'-phosphates.. In terms of biological role, a P subtype restriction enzyme that recognizes the double-stranded sequence 5'-AAGCTT-3' and cleaves after A-1. In Haemophilus influenzae (strain ATCC 51907 / DSM 11121 / KW20 / Rd), this protein is Type II restriction enzyme HindIII.